A 523-amino-acid polypeptide reads, in one-letter code: Glycerate kinase (523 aa).

At Ser-60 the chain carries Phosphoserine.

It belongs to the glycerate kinase type-2 family. Widely expressed.

It is found in the cytoplasm. The protein resides in the mitochondrion. It carries out the reaction (R)-glycerate + ATP = (2R)-3-phosphoglycerate + ADP + H(+). This is Glycerate kinase (GLYCTK) from Homo sapiens (Human).